Reading from the N-terminus, the 238-residue chain is 7-cyano-7-deazaguanine synthase (238 aa).

14–24 (FSGGQDSATCL) serves as a coordination point for ATP. Positions 202, 217, 220, and 223 each coordinate Zn(2+).

Belongs to the QueC family. Zn(2+) serves as cofactor.

It carries out the reaction 7-carboxy-7-deazaguanine + NH4(+) + ATP = 7-cyano-7-deazaguanine + ADP + phosphate + H2O + H(+). The protein operates within purine metabolism; 7-cyano-7-deazaguanine biosynthesis. Catalyzes the ATP-dependent conversion of 7-carboxy-7-deazaguanine (CDG) to 7-cyano-7-deazaguanine (preQ(0)). This Nitrobacter hamburgensis (strain DSM 10229 / NCIMB 13809 / X14) protein is 7-cyano-7-deazaguanine synthase.